The sequence spans 367 residues: tRNA/tmRNA (uracil-C(5))-methyltransferase (367 aa).

Residues Q190, Y218, N223, E239, and D299 each contribute to the S-adenosyl-L-methionine site. C324 serves as the catalytic Nucleophile. Catalysis depends on E358, which acts as the Proton acceptor.

Belongs to the class I-like SAM-binding methyltransferase superfamily. RNA M5U methyltransferase family. TrmA subfamily.

It catalyses the reaction uridine(54) in tRNA + S-adenosyl-L-methionine = 5-methyluridine(54) in tRNA + S-adenosyl-L-homocysteine + H(+). The catalysed reaction is uridine(341) in tmRNA + S-adenosyl-L-methionine = 5-methyluridine(341) in tmRNA + S-adenosyl-L-homocysteine + H(+). Functionally, dual-specificity methyltransferase that catalyzes the formation of 5-methyluridine at position 54 (m5U54) in all tRNAs, and that of position 341 (m5U341) in tmRNA (transfer-mRNA). The protein is tRNA/tmRNA (uracil-C(5))-methyltransferase of Dickeya chrysanthemi (strain Ech1591) (Dickeya zeae (strain Ech1591)).